A 169-amino-acid polypeptide reads, in one-letter code: MAVLQVLHIPDERLRKVAEPVKEVNAEIQRIVDDMFDTMYAEEGIGLAATQVDIHQRIIVIDVSENREEQLVLINPEMLEKDGETGIEEGCLSIPEQRALVPRAEKVKIRALDRDGKPFELEADGLLAICIQHEMDHLVGKLFIDYLSPLKQQRIRQKVEKLDRLRSRA.

Fe cation-binding residues include Cys91 and His133. Glu134 is a catalytic residue. His137 lines the Fe cation pocket.

It belongs to the polypeptide deformylase family. It depends on Fe(2+) as a cofactor.

It carries out the reaction N-terminal N-formyl-L-methionyl-[peptide] + H2O = N-terminal L-methionyl-[peptide] + formate. In terms of biological role, removes the formyl group from the N-terminal Met of newly synthesized proteins. Requires at least a dipeptide for an efficient rate of reaction. N-terminal L-methionine is a prerequisite for activity but the enzyme has broad specificity at other positions. The protein is Peptide deformylase of Klebsiella pneumoniae subsp. pneumoniae (strain ATCC 700721 / MGH 78578).